The following is a 587-amino-acid chain: 2-succinyl-5-enolpyruvyl-6-hydroxy-3-cyclohexene-1-carboxylate synthase (587 aa).

This sequence belongs to the TPP enzyme family. MenD subfamily. In terms of assembly, homodimer. Requires Mg(2+) as cofactor. It depends on Mn(2+) as a cofactor. Thiamine diphosphate is required as a cofactor.

It carries out the reaction isochorismate + 2-oxoglutarate + H(+) = 5-enolpyruvoyl-6-hydroxy-2-succinyl-cyclohex-3-ene-1-carboxylate + CO2. It functions in the pathway quinol/quinone metabolism; 1,4-dihydroxy-2-naphthoate biosynthesis; 1,4-dihydroxy-2-naphthoate from chorismate: step 2/7. Its pathway is cofactor biosynthesis; phylloquinone biosynthesis. In terms of biological role, catalyzes the thiamine diphosphate-dependent decarboxylation of 2-oxoglutarate and the subsequent addition of the resulting succinic semialdehyde-thiamine pyrophosphate anion to isochorismate to yield 2-succinyl-5-enolpyruvyl-6-hydroxy-3-cyclohexene-1-carboxylate (SEPHCHC). The sequence is that of 2-succinyl-5-enolpyruvyl-6-hydroxy-3-cyclohexene-1-carboxylate synthase from Prochlorococcus marinus (strain MIT 9301).